A 483-amino-acid polypeptide reads, in one-letter code: Altronate oxidoreductase (483 aa).

Position 18-29 (18-29 (IIQFGEGNFLRA)) interacts with NAD(+).

It belongs to the mannitol dehydrogenase family. UxaB subfamily.

It catalyses the reaction D-altronate + NAD(+) = keto-D-tagaturonate + NADH + H(+). The protein operates within carbohydrate metabolism; pentose and glucuronate interconversion. The sequence is that of Altronate oxidoreductase from Escherichia coli (strain 55989 / EAEC).